Here is a 267-residue protein sequence, read N- to C-terminus: DNA repair protein RecO (267 aa).

It belongs to the RecO family.

In terms of biological role, involved in DNA repair and RecF pathway recombination. This chain is DNA repair protein RecO, found in Moorella thermoacetica (strain ATCC 39073 / JCM 9320).